The primary structure comprises 471 residues: Glutamate--tRNA ligase 1 (471 aa).

The 'HIGH' region signature appears at 10–20 (PSPTGYLHIGG). Positions 99, 101, 126, and 128 each coordinate Zn(2+). Residues 238–242 (RLSKR) carry the 'KMSKS' region motif. Residue lysine 241 coordinates ATP.

It belongs to the class-I aminoacyl-tRNA synthetase family. Glutamate--tRNA ligase type 1 subfamily. Monomer. The cofactor is Zn(2+).

Its subcellular location is the cytoplasm. The enzyme catalyses tRNA(Glu) + L-glutamate + ATP = L-glutamyl-tRNA(Glu) + AMP + diphosphate. Its function is as follows. Catalyzes the attachment of glutamate to tRNA(Glu) in a two-step reaction: glutamate is first activated by ATP to form Glu-AMP and then transferred to the acceptor end of tRNA(Glu). This is Glutamate--tRNA ligase 1 from Alkalilimnicola ehrlichii (strain ATCC BAA-1101 / DSM 17681 / MLHE-1).